Here is a 157-residue protein sequence, read N- to C-terminus: Peptide methionine sulfoxide reductase MsrA (157 aa).

Cys10 is an active-site residue.

It belongs to the MsrA Met sulfoxide reductase family.

It catalyses the reaction L-methionyl-[protein] + [thioredoxin]-disulfide + H2O = L-methionyl-(S)-S-oxide-[protein] + [thioredoxin]-dithiol. It carries out the reaction [thioredoxin]-disulfide + L-methionine + H2O = L-methionine (S)-S-oxide + [thioredoxin]-dithiol. Has an important function as a repair enzyme for proteins that have been inactivated by oxidation. Catalyzes the reversible oxidation-reduction of methionine sulfoxide in proteins to methionine. In Clostridium botulinum (strain Okra / Type B1), this protein is Peptide methionine sulfoxide reductase MsrA.